The sequence spans 268 residues: Tryptophan synthase alpha chain (268 aa).

Active-site proton acceptor residues include Glu49 and Asp60.

The protein belongs to the TrpA family. As to quaternary structure, tetramer of two alpha and two beta chains.

It catalyses the reaction (1S,2R)-1-C-(indol-3-yl)glycerol 3-phosphate + L-serine = D-glyceraldehyde 3-phosphate + L-tryptophan + H2O. It participates in amino-acid biosynthesis; L-tryptophan biosynthesis; L-tryptophan from chorismate: step 5/5. Functionally, the alpha subunit is responsible for the aldol cleavage of indoleglycerol phosphate to indole and glyceraldehyde 3-phosphate. The chain is Tryptophan synthase alpha chain from Haemophilus influenzae (strain 86-028NP).